Reading from the N-terminus, the 430-residue chain is Enolase (430 aa).

Q167 lines the (2R)-2-phosphoglycerate pocket. E209 functions as the Proton donor in the catalytic mechanism. Mg(2+) contacts are provided by D246, E287, and D314. 4 residues coordinate (2R)-2-phosphoglycerate: K339, R368, S369, and K390. K339 (proton acceptor) is an active-site residue.

This sequence belongs to the enolase family. Requires Mg(2+) as cofactor.

It localises to the cytoplasm. Its subcellular location is the secreted. It is found in the cell surface. It catalyses the reaction (2R)-2-phosphoglycerate = phosphoenolpyruvate + H2O. It participates in carbohydrate degradation; glycolysis; pyruvate from D-glyceraldehyde 3-phosphate: step 4/5. Functionally, catalyzes the reversible conversion of 2-phosphoglycerate (2-PG) into phosphoenolpyruvate (PEP). It is essential for the degradation of carbohydrates via glycolysis. The sequence is that of Enolase from Prochlorococcus marinus (strain MIT 9515).